Reading from the N-terminus, the 635-residue chain is 3-dehydroshikimate dehydratase (635 aa).

4 residues coordinate a divalent metal cation: Glu-134, Asp-165, Gln-191, and Glu-239. 2 VOC domains span residues 295 to 414 and 440 to 590; these read GVEF…LVEQ and RIDH…VYTE. The Mg(2+) site is built by His-443, His-521, and Glu-599.

Belongs to the bacterial two-domain DSD family. Homodimer. Co(2+) serves as cofactor. It depends on Ni(2+) as a cofactor. The cofactor is Mg(2+). Requires Mn(2+) as cofactor.

The enzyme catalyses 3-dehydroshikimate = 3,4-dihydroxybenzoate + H2O. The protein operates within aromatic compound metabolism; 3,4-dihydroxybenzoate biosynthesis. In terms of biological role, catalyzes the conversion of 3-dehydroshikimate to protocatechuate (3,4-dihydroxybenzoate), a common intermediate of quinate and shikimate degradation pathways. The polypeptide is 3-dehydroshikimate dehydratase (Pseudomonas putida (strain ATCC 47054 / DSM 6125 / CFBP 8728 / NCIMB 11950 / KT2440)).